The following is a 293-amino-acid chain: Ribosomal RNA small subunit methyltransferase H (293 aa).

S-adenosyl-L-methionine is bound by residues 31 to 33 (GGY), D49, F76, D97, and Q104.

The protein belongs to the methyltransferase superfamily. RsmH family.

It is found in the cytoplasm. It catalyses the reaction cytidine(1402) in 16S rRNA + S-adenosyl-L-methionine = N(4)-methylcytidine(1402) in 16S rRNA + S-adenosyl-L-homocysteine + H(+). Functionally, specifically methylates the N4 position of cytidine in position 1402 (C1402) of 16S rRNA. This chain is Ribosomal RNA small subunit methyltransferase H, found in Wolbachia sp. subsp. Drosophila simulans (strain wRi).